The following is a 463-amino-acid chain: Probable ECA polymerase (463 aa).

Transmembrane regions (helical) follow at residues 6–26 (FGGL…LTWM), 39–59 (FSLL…VLVF), 65–85 (VVPV…YAVY), 112–132 (ANLT…IFFL), 154–174 (GVAL…VYFL), 180–200 (AWLL…VIVG), 201–221 (GTRA…IVRG), 222–242 (WITL…MFWL), 340–360 (LVVM…GLVI), 377–397 (YKAA…IVLT), and 408–428 (VVFF…LYWL).

The protein belongs to the WzyE family. Probably part of a complex composed of WzxE, WzyE and WzzE.

It localises to the cell inner membrane. The protein operates within bacterial outer membrane biogenesis; enterobacterial common antigen biosynthesis. Its function is as follows. Probably involved in the polymerization of enterobacterial common antigen (ECA) trisaccharide repeat units. In Pectobacterium atrosepticum (strain SCRI 1043 / ATCC BAA-672) (Erwinia carotovora subsp. atroseptica), this protein is Probable ECA polymerase.